Here is a 501-residue protein sequence, read N- to C-terminus: Glycosyltransferase family 92 protein F13G3.3 (501 aa).

A helical membrane pass occupies residues 10 to 30 (LSVVLLFSFLFFVTAVLLQFI). One can recognise a GT92 domain in the interval 151–439 (KPVVMCISPL…ISDCYKQSYY (289 aa)).

The protein belongs to the glycosyltransferase 92 family.

It localises to the membrane. This chain is Glycosyltransferase family 92 protein F13G3.3, found in Caenorhabditis elegans.